The following is a 381-amino-acid chain: Transaldolase 1 (381 aa).

Catalysis depends on Lys-149, which acts as the Schiff-base intermediate with substrate.

Belongs to the transaldolase family. Type 2 subfamily.

It localises to the cytoplasm. The catalysed reaction is D-sedoheptulose 7-phosphate + D-glyceraldehyde 3-phosphate = D-erythrose 4-phosphate + beta-D-fructose 6-phosphate. The protein operates within carbohydrate degradation; pentose phosphate pathway; D-glyceraldehyde 3-phosphate and beta-D-fructose 6-phosphate from D-ribose 5-phosphate and D-xylulose 5-phosphate (non-oxidative stage): step 2/3. Functionally, transaldolase is important for the balance of metabolites in the pentose-phosphate pathway. The protein is Transaldolase 1 (tal1) of Streptomyces coelicolor (strain ATCC BAA-471 / A3(2) / M145).